The sequence spans 254 residues: PSME3-interacting protein (254 aa).

N-acetylmethionine is present on Met1. At Ser17 the chain carries Phosphoserine. The span at 22 to 39 shows a compositional bias: basic and acidic residues; that stretch reads DERRKRRQEEWEKVRKPE. Residues 22–52 form a disordered region; it reads DERRKRRQEEWEKVRKPEDPEECPEEVYDPR. N6-acetyllysine is present on Lys139. Residues 155–195 form a disordered region; sequence GAVKHKSSESGNSVKRLKPDPEPDDKNQEPSSCKSLGNTSL. The span at 171-182 shows a compositional bias: basic and acidic residues; the sequence is LKPDPEPDDKNQ. A compositionally biased stretch (polar residues) spans 183-195; it reads EPSSCKSLGNTSL. Positions 201–254 are interaction with PSME3; that stretch reads HCPSAAVCIGILPGLGAYSGSSDSESSSDSEGTINATGKIVSSIFRTNTFLEAP. Ser222 and Ser228 each carry phosphoserine; by CK2.

As to quaternary structure, interacts (via C-terminus) with both free and 20S proteasome-bound forms of the proteasome activator complex subunit PSME3; the interaction is direct. Phosphorylation by CK2 stabilizes the interaction with PSME3.

The protein localises to the nucleus. Functionally, promotes the association of the proteasome activator complex subunit PSME3 with the 20S proteasome and regulates its activity. Inhibits PSME3-mediated degradation of some proteasome substrates, probably by affecting their diffusion rate into the catalytic chamber of the proteasome. Also inhibits the interaction of PSME3 with COIL, inhibits accumulation of PSME3 in Cajal bodies and positively regulates the number of Cajal bodies in the nucleus. The chain is PSME3-interacting protein from Homo sapiens (Human).